Here is a 1718-residue protein sequence, read N- to C-terminus: PR domain zinc finger protein 2 (1718 aa).

The 114-residue stretch at 28–141 folds into the SET domain; sequence EEVRLFPSAV…PGEELLVWYN (114 aa). Residues 155–335 are disordered; the sequence is ERASARSKRS…TSEETLEDCS (181 aa). Residues 159–173 show a composition bias toward basic residues; that stretch reads ARSKRSSPKSRKGKK. The segment covering 189–202 has biased composition (polar residues); the sequence is QLKTSEPDFTSANM. The segment covering 204 to 216 has biased composition (basic and acidic residues); the sequence is DSAEGPKEDEEKP. The segment covering 265–297 has biased composition (acidic residues); the sequence is DLGEEEEEEEEEDEEEEEDDDDDELEDEGEEEA. Positions 294–316 are retinoblastoma protein binding; the sequence is EEEASMPNENSVKEPEIRCDEKP. The segment covering 304–327 has biased composition (basic and acidic residues); it reads SVKEPEIRCDEKPEDLLEEPKTTS. K347 is covalently cross-linked (Glycyl lysine isopeptide (Lys-Gly) (interchain with G-Cter in SUMO2)). 2 consecutive C2H2-type zinc fingers follow at residues 360–382 and 390–412; these read FPCQ…MHIH and FKCK…ERRH. The interval 405–457 is disordered; the sequence is RRRHERRHEAGLKRKPSQTLQPSEDLADGKASGENVASKDDSSPPSLGPDCLI. S421 is modified (phosphoserine). The segment at 483–506 adopts a C2H2-type 3 zinc-finger fold; sequence HPCKYCKKVFGTHTNMRRHQRRVH. Disordered regions lie at residues 513-550 and 622-660; these read KGVR…EGEA and EDLP…DPMV. S643 bears the Phosphoserine mark. Residues K651, K690, and K692 each participate in a glycyl lysine isopeptide (Lys-Gly) (interchain with G-Cter in SUMO2) cross-link. A disordered region spans residues 729-797; sequence TSSRFKRRTS…GRDERETVSP (69 aa). Residues 738–748 show a composition bias toward low complexity; the sequence is SSPPSSPQHSP. S743 bears the Phosphoserine mark. A Glycyl lysine isopeptide (Lys-Gly) (interchain with G-Cter in SUMO2) cross-link involves residue K774. Phosphoserine is present on residues S781, S785, and S796. Glycyl lysine isopeptide (Lys-Gly) (interchain with G-Cter in SUMO2) cross-links involve residues K866 and K879. The disordered stretch occupies residues 903-1083; that stretch reads VENPADGTRS…SPPPLSAISS (181 aa). The span at 951 to 969 shows a compositional bias: low complexity; that stretch reads LQTPSLSSGQLPPLLIPTD. Short sequence motifs (SH3-binding) lie at residues 970–979 and 985–998; these read PSSPPPCPPV and PPPP…LPAP. The segment covering 970–997 has biased composition (pro residues); the sequence is PSSPPPCPPVLTVATPPPPLLPTVPLPA. A compositionally biased stretch (low complexity) spans 1018-1027; that stretch reads SPLPILSPTV. Residues 1028–1038 show a composition bias toward pro residues; it reads SPSPSPIPPVE. The short motif at 1028-1052 is the SH3-binding element; that stretch reads SPSPSPIPPVEPLMSAASPGPPTLS. The segment covering 1042–1072 has biased composition (low complexity); sequence SAASPGPPTLSSSSSSSSSSSSFSSSSSSSS. 3 consecutive C2H2-type zinc fingers follow at residues 1134–1156, 1162–1185, and 1191–1214; these read FVCN…LSIH, FKCE…FLLH, and FVCS…RDLH. Glycyl lysine isopeptide (Lys-Gly) (interchain with G-Cter in SUMO2) cross-links involve residues K1147 and K1151. The segment at 1244 to 1265 is disordered; the sequence is HMQSLPEDPLETSKEEEELNDS. Positions 1251–1265 are enriched in acidic residues; that stretch reads DPLETSKEEEELNDS. Glycyl lysine isopeptide (Lys-Gly) (interchain with G-Cter in SUMO2) cross-links involve residues K1257 and K1281. The segment at 1333 to 1355 adopts a C2H2-type 7; atypical zinc-finger fold; the sequence is IRCTKCGKGVDNMPELHKHILAC. The C2H2-type 8; atypical zinc finger occupies 1455-1478; that stretch reads HICPYCNREFTYIGSLNKHAAFSC. 3 disordered regions span residues 1478–1576, 1589–1612, and 1625–1652; these read CPKK…LRNS, GKKP…RSLH, and KSTL…VTRS. Basic residues predominate over residues 1486–1498; the sequence is PKKKVSHSSKKGG. Residues 1499-1511 show a composition bias toward low complexity; that stretch reads HSSPASSDKNSNS. 2 stretches are compositionally biased toward polar residues: residues 1525 to 1556 and 1599 to 1608; these read QSMQ…SKQN and HSAQLSSKTS. Positions 1635 to 1645 are enriched in basic and acidic residues; sequence DRFNIKSRERS.

This sequence belongs to the class V-like SAM-binding methyltransferase superfamily. Binds to the retinoblastoma protein (RB). Interacts with GATA3. Highly expressed in retinoblastoma cell lines and in brain tumors. Also expressed in a number of other cell lines and in brain, heart, skeletal muscle, liver and spleen. Isoform 1 is expressed in testis at much higher level than isoform 3.

The protein localises to the nucleus. The enzyme catalyses L-lysyl(9)-[histone H3] + 3 S-adenosyl-L-methionine = N(6),N(6),N(6)-trimethyl-L-lysyl(9)-[histone H3] + 3 S-adenosyl-L-homocysteine + 3 H(+). S-adenosyl-L-methionine-dependent histone methyltransferase that specifically methylates 'Lys-9' of histone H3. May function as a DNA-binding transcription factor. Binds to the macrophage-specific TPA-responsive element (MTE) of the HMOX1 (heme oxygenase 1) gene and may act as a transcriptional activator of this gene. This chain is PR domain zinc finger protein 2 (PRDM2), found in Homo sapiens (Human).